Here is a 274-residue protein sequence, read N- to C-terminus: Undecaprenyl-diphosphatase 1 (274 aa).

Helical transmembrane passes span 4 to 24, 45 to 65, 84 to 104, 111 to 131, 146 to 166, 186 to 206, 217 to 237, and 249 to 269; these read LLLLKAAIMGIVEGITEFLPI, SAVFVVAIQMGAIAAVIYEYW, HLAISLILASIPIVLVGLSFG, LFNDVAVAIGLIVGGVIIMWI, IGLKQAIWIGLIQVLSLIPGT, ATEFSFFLGIPVIIGAGLLDL, FDWSVLGVGILVSFVSALLLI, and FMVFAWYRIVSGLLILLFAYT.

Belongs to the UppP family.

The protein resides in the cell inner membrane. It carries out the reaction di-trans,octa-cis-undecaprenyl diphosphate + H2O = di-trans,octa-cis-undecaprenyl phosphate + phosphate + H(+). Functionally, catalyzes the dephosphorylation of undecaprenyl diphosphate (UPP). Confers resistance to bacitracin. The polypeptide is Undecaprenyl-diphosphatase 1 (Acinetobacter baylyi (strain ATCC 33305 / BD413 / ADP1)).